Here is a 1135-residue protein sequence, read N- to C-terminus: Phytochrome C (1135 aa).

Over residues 1 to 11 (MSSPLNNRGTC) the composition is skewed to polar residues. The disordered stretch occupies residues 1 to 26 (MSSPLNNRGTCSRSSSARSRHSARVV). Residues 216-399 (NLSLLCDVLV…VFGIQLNKEV (184 aa)) form the GAF domain. Phytochromobilin is bound at residue C321. PAS domains follow at residues 618–688 (VTNE…LQGI) and 748–822 (IQGD…TKLS). A Histidine kinase domain is found at 902 to 1122 (YIHQELRNPL…IILIEFPVAQ (221 aa)).

The protein belongs to the phytochrome family. As to quaternary structure, homodimer. Post-translationally, contains one covalently linked phytochromobilin chromophore.

Functionally, regulatory photoreceptor which exists in two forms that are reversibly interconvertible by light: the Pr form that absorbs maximally in the red region of the spectrum and the Pfr form that absorbs maximally in the far-red region. Photoconversion of Pr to Pfr induces an array of morphogenic responses, whereas reconversion of Pfr to Pr cancels the induction of those responses. Pfr controls the expression of a number of nuclear genes including those encoding the small subunit of ribulose-bisphosphate carboxylase, chlorophyll A/B binding protein, protochlorophyllide reductase, rRNA, etc. It also controls the expression of its own gene(s) in a negative feedback fashion. The polypeptide is Phytochrome C (PHYC) (Sorghum bicolor (Sorghum)).